A 156-amino-acid chain; its full sequence is SsrA-binding protein (156 aa).

Positions 135-156 (HALRERQDRREADRAMSERKDR) are disordered.

The protein belongs to the SmpB family.

It is found in the cytoplasm. Its function is as follows. Required for rescue of stalled ribosomes mediated by trans-translation. Binds to transfer-messenger RNA (tmRNA), required for stable association of tmRNA with ribosomes. tmRNA and SmpB together mimic tRNA shape, replacing the anticodon stem-loop with SmpB. tmRNA is encoded by the ssrA gene; the 2 termini fold to resemble tRNA(Ala) and it encodes a 'tag peptide', a short internal open reading frame. During trans-translation Ala-aminoacylated tmRNA acts like a tRNA, entering the A-site of stalled ribosomes, displacing the stalled mRNA. The ribosome then switches to translate the ORF on the tmRNA; the nascent peptide is terminated with the 'tag peptide' encoded by the tmRNA and targeted for degradation. The ribosome is freed to recommence translation, which seems to be the essential function of trans-translation. This chain is SsrA-binding protein, found in Kineococcus radiotolerans (strain ATCC BAA-149 / DSM 14245 / SRS30216).